A 112-amino-acid chain; its full sequence is Iron-sulfur cluster assembly protein CyaY (112 aa).

The protein belongs to the frataxin family.

Functionally, involved in iron-sulfur (Fe-S) cluster assembly. May act as a regulator of Fe-S biogenesis. This Herminiimonas arsenicoxydans protein is Iron-sulfur cluster assembly protein CyaY.